A 414-amino-acid chain; its full sequence is Tyrosine--tRNA ligase (414 aa).

Tyr35 contacts L-tyrosine. The short motif at 40–49 (PTADSLHVGH) is the 'HIGH' region element. Residues Tyr164 and Gln168 each contribute to the L-tyrosine site. The short motif at 226 to 230 (KFGKT) is the 'KMSKS' region element. Lys229 contributes to the ATP binding site. The region spanning 347 to 414 (TKVIDALIEV…KKKYFVILIK (68 aa)) is the S4 RNA-binding domain.

This sequence belongs to the class-I aminoacyl-tRNA synthetase family. TyrS type 1 subfamily. In terms of assembly, homodimer.

Its subcellular location is the cytoplasm. The enzyme catalyses tRNA(Tyr) + L-tyrosine + ATP = L-tyrosyl-tRNA(Tyr) + AMP + diphosphate + H(+). In terms of biological role, catalyzes the attachment of tyrosine to tRNA(Tyr) in a two-step reaction: tyrosine is first activated by ATP to form Tyr-AMP and then transferred to the acceptor end of tRNA(Tyr). This chain is Tyrosine--tRNA ligase, found in Mycoplasma mycoides subsp. mycoides SC (strain CCUG 32753 / NCTC 10114 / PG1).